A 451-amino-acid chain; its full sequence is Protein SAR DEFICIENT 1 (451 aa).

The segment at aspartate 149–histidine 270 is DNA-binding.

It belongs to the plant ACBP60 protein family. As to quaternary structure, (Microbial infection) Interacts with V.dahliae SCP41.

The protein localises to the nucleus. Its function is as follows. Transcription activator that binds DNA in a sequence-specific manner, 5'-GAAATTTTGG-3', to promote the expression of target genes. Recruited to the promoter of ICS1 and other defense-related genes (e.g. PR1 and SID2) in response to both biotic (e.g. Pseudomonas syringae pv. maculicola ES4326) and abiotic stresses (e.g. UV-B), thus triggering slow defense responses by stimulating salicylic acid (SA) biosynthesis. Required for basal and systemic acquired resistance to P.syringae pv. maculicola and Hyaloperonospora arabidopsidis. The chain is Protein SAR DEFICIENT 1 from Arabidopsis thaliana (Mouse-ear cress).